Reading from the N-terminus, the 490-residue chain is AP-5 complex subunit mu-1 (490 aa).

The MHD domain maps to 206–476; sequence KPQVSISITE…LISSDYYIWN (271 aa).

It belongs to the adaptor complexes medium subunit family. In terms of assembly, probably part of the adaptor protein complex 5 (AP-5) a tetramer composed of AP5B1, AP5M1, AP5S1 and AP5Z1. In terms of tissue distribution, expressed in various tumor cell lines including Jurkat, Hep-G2 and HeLa.

It localises to the cytoplasm. Its subcellular location is the cytosol. The protein resides in the late endosome membrane. The protein localises to the lysosome membrane. As part of AP-5, a probable fifth adaptor protein complex it may be involved in endosomal transport. According to PubMed:18395520, it may play a role in cell death. This Homo sapiens (Human) protein is AP-5 complex subunit mu-1 (AP5M1).